We begin with the raw amino-acid sequence, 493 residues long: UDP-N-acetylmuramoyl-L-alanyl-D-glutamate--2,6-diaminopimelate ligase (493 aa).

Thr-32 contacts UDP-N-acetyl-alpha-D-muramoyl-L-alanyl-D-glutamate. 110 to 116 (GTNGKTT) contacts ATP. Residues Asn-151, 152-153 (TT), Ser-179, and Arg-187 contribute to the UDP-N-acetyl-alpha-D-muramoyl-L-alanyl-D-glutamate site. Position 219 is an N6-carboxylysine (Lys-219). Residues Arg-386, 410–413 (DNPR), Gly-460, and Glu-464 contribute to the meso-2,6-diaminopimelate site. The Meso-diaminopimelate recognition motif signature appears at 410–413 (DNPR).

Belongs to the MurCDEF family. MurE subfamily. Mg(2+) serves as cofactor. In terms of processing, carboxylation is probably crucial for Mg(2+) binding and, consequently, for the gamma-phosphate positioning of ATP.

The protein localises to the cytoplasm. The enzyme catalyses UDP-N-acetyl-alpha-D-muramoyl-L-alanyl-D-glutamate + meso-2,6-diaminopimelate + ATP = UDP-N-acetyl-alpha-D-muramoyl-L-alanyl-gamma-D-glutamyl-meso-2,6-diaminopimelate + ADP + phosphate + H(+). The protein operates within cell wall biogenesis; peptidoglycan biosynthesis. Functionally, catalyzes the addition of meso-diaminopimelic acid to the nucleotide precursor UDP-N-acetylmuramoyl-L-alanyl-D-glutamate (UMAG) in the biosynthesis of bacterial cell-wall peptidoglycan. The protein is UDP-N-acetylmuramoyl-L-alanyl-D-glutamate--2,6-diaminopimelate ligase of Lactiplantibacillus plantarum (strain ATCC BAA-793 / NCIMB 8826 / WCFS1) (Lactobacillus plantarum).